A 435-amino-acid polypeptide reads, in one-letter code: MVDMDWKRKMVSSDLPNSPKLSSKLHVTIPSPFKIVPVSSPISCSAPALCSAYELYLRLPELRKLWSSRDFPQWTSEPILKPALQALEISFRLVFAVCSDTRPYINHREWNRRLDSLITKQIQLVAAICEDEEEEGISAEAPVGGGRSSLSLLPQLATWRRSEALGKKILYTIDNEMSRCKYTLGLGEQNIAGKPNLRYDAICRPNEIYSLKDNPYADHIDNHENQTLYIIHQILESWIYASGNLLNRIVSSIEEEKFGKASNDVYLLEKIWKILAEIEDLHMLMDPEDFLKLKKQLQIKSTGKNDAFCFRSKGLVEMMKMSKDLRQKVPAVLAVEVDPTGGPRLQEAAMKLYARKTECDKIHLLQGMQAVEAAAKSFFFGYRQLVAAMMGSAEMNATASQESCDSLSQIFMEPTYFPSLDAAKTFLGEFWSHLG.

Interacts with SNF4.

Its subcellular location is the cytoplasm. Functionally, positive regulator of basal resistance. This chain is Nematode resistance protein-like HSPRO2 (HSPRO2), found in Arabidopsis thaliana (Mouse-ear cress).